A 252-amino-acid chain; its full sequence is Imidazole glycerol phosphate synthase subunit HisF (252 aa).

Active-site residues include Asp11 and Asp130.

The protein belongs to the HisA/HisF family. As to quaternary structure, heterodimer of HisH and HisF.

The protein localises to the cytoplasm. The enzyme catalyses 5-[(5-phospho-1-deoxy-D-ribulos-1-ylimino)methylamino]-1-(5-phospho-beta-D-ribosyl)imidazole-4-carboxamide + L-glutamine = D-erythro-1-(imidazol-4-yl)glycerol 3-phosphate + 5-amino-1-(5-phospho-beta-D-ribosyl)imidazole-4-carboxamide + L-glutamate + H(+). The protein operates within amino-acid biosynthesis; L-histidine biosynthesis; L-histidine from 5-phospho-alpha-D-ribose 1-diphosphate: step 5/9. Functionally, IGPS catalyzes the conversion of PRFAR and glutamine to IGP, AICAR and glutamate. The HisF subunit catalyzes the cyclization activity that produces IGP and AICAR from PRFAR using the ammonia provided by the HisH subunit. The polypeptide is Imidazole glycerol phosphate synthase subunit HisF (Lacticaseibacillus casei (strain BL23) (Lactobacillus casei)).